Here is a 306-residue protein sequence, read N- to C-terminus: MIKRNLNDLLSFVAVAREGTFTRAAAQLGVTQSALSQSISGLEARLQIRLLTRTTRSVSPTAAGERLLNAIGNRFDEIEAELDELSALRDKPSGTVRITCGDHIQRTLLLPRLTPLLLEYPDIKVEFDINYGFRDIVADRFDAGVRLGDTIDKDMIAVPIGPPVRMAVVAAPAYFAAHPKPRSPRDLVDHNCINMRMQSGGGLYAWDFQRKDRHVNVRVDGQLIFNTSPNIVDAALAGLGIAWLPEEEFAPHIEEGRLLRVLENWCPLFPGYYLYYPNRRQPSPAFSLVVDALRYTRPRGTTIGGG.

The HTH lysR-type domain maps to 1-61 (MIKRNLNDLL…TRTTRSVSPT (61 aa)). The H-T-H motif DNA-binding region spans 21–40 (FTRAAAQLGVTQSALSQSIS).

Belongs to the LysR transcriptional regulatory family.

Its function is as follows. May have a role in the regulation of oprD expression. The sequence is that of Putative transcriptional regulator from Pseudomonas aeruginosa (strain ATCC 15692 / DSM 22644 / CIP 104116 / JCM 14847 / LMG 12228 / 1C / PRS 101 / PAO1).